The following is a 322-amino-acid chain: 8-oxo-(d)GTP phosphatase (322 aa).

The interval 1 to 21 is disordered; that stretch reads MMPVDDLQEIPLSKDTTEKSK. Residues 22-156 form the Nudix hydrolase domain; sequence HTVRAAGAVL…DDRKVLRRFV (135 aa). Substrate-binding positions include 55–58, Asp-60, and 65–67; these read RPRY and KGK. Residues Lys-65, Glu-81, and Glu-85 each contribute to the Mg(2+) site. The Nudix box signature appears at 66 to 87; the sequence is GKLDQGETEPVAAAREIHEETG. Residues Tyr-101, Lys-108, Glu-127, and Tyr-145 each contribute to the substrate site. Glu-127 contributes to the Mg(2+) binding site.

Belongs to the Nudix hydrolase family. In terms of assembly, forms head-to-tail homodimers. The cofactor is Mg(2+).

It catalyses the reaction 8-oxo-dGTP + H2O = 8-oxo-dGDP + phosphate + H(+). It carries out the reaction 8-oxo-GTP + H2O = 8-oxo-GDP + phosphate + H(+). The enzyme catalyses 8-oxo-dGDP + H2O = 8-oxo-dGMP + phosphate + H(+). The catalysed reaction is 8-oxo-GDP + H2O = 8-oxo-GMP + phosphate + H(+). It catalyses the reaction P(1),P(6)-bis(5'-adenosyl) hexaphosphate + H2O = 2 ATP + 2 H(+). It carries out the reaction P(1),P(5)-bis(5'-adenosyl) pentaphosphate + H2O = ADP + ATP + 2 H(+). The enzyme catalyses P(1),P(4)-bis(5'-adenosyl) tetraphosphate + H2O = AMP + ATP + 2 H(+). Ap4A hydrolysis is inhibited by fluoride ions. Catalyzes the conversion of 8-oxo-dGTP to 8-oxo-dGDP, and 8-oxo-GTP to 8-oxo-GDP. At high enzyme concentrations, can also catalyze the conversion of 8-oxo-dGDP to 8-oxo-dGMP, and 8-oxo-GDP to 8-oxo-GMP. In addition, catalyzes the hydrolysis of the diadenosine polyphosphates diadenosine hexaphosphate (Ap6A), diadenosine pentaphosphate (Ap5A) and diadenosine tetraphosphate (Ap4A). This Mycolicibacterium smegmatis (strain ATCC 700084 / mc(2)155) (Mycobacterium smegmatis) protein is 8-oxo-(d)GTP phosphatase.